A 261-amino-acid polypeptide reads, in one-letter code: Triosephosphate isomerase (261 aa).

Positions 11 and 13 each coordinate D-glyceraldehyde 3-phosphate. Residue histidine 102 is the Electrophile of the active site. Glutamate 174 (proton acceptor) is an active-site residue. Positions 180, 239, and 241 each coordinate D-glyceraldehyde 3-phosphate.

The protein belongs to the triosephosphate isomerase family. Homodimer.

It carries out the reaction D-glyceraldehyde 3-phosphate = dihydroxyacetone phosphate. It participates in carbohydrate biosynthesis; gluconeogenesis. It functions in the pathway carbohydrate degradation; glycolysis; D-glyceraldehyde 3-phosphate from glycerone phosphate: step 1/1. Catalyzes the interconversion of glyceraldehyde 3-phosphate and dihydroxyacetone phosphate in the glycolytic and gluconeogenic pathways. This is Triosephosphate isomerase from Entamoeba histolytica (strain ATCC 30459 / HM-1:IMSS / ABRM).